Here is a 100-residue protein sequence, read N- to C-terminus: MTPWFLYLIRTADNKLYTGITTDVERRYQQHQSGKGAKALRGKGELTLAFSAPVGDRSLALRAEYRVKQLTKRQKERLVAEGAGFAELLSSLQTPKIKSD.

The GIY-YIG domain occupies 2–77 (TPWFLYLIRT…KQLTKRQKER (76 aa)).

The protein belongs to the UPF0213 family.

The polypeptide is UPF0213 protein YhbQ (Escherichia coli O7:K1 (strain IAI39 / ExPEC)).